The sequence spans 220 residues: Protein myomaker (220 aa).

M1 is a topological domain (extracellular). A helical membrane pass occupies residues G2–A22. Topologically, residues S23–Y37 are cytoplasmic. A helical membrane pass occupies residues F38 to L58. The Extracellular segment spans residues C59–D64. The chain crosses the membrane as a helical span at residues I65–L85. Residues G86–R93 are Cytoplasmic-facing. A helical transmembrane segment spans residues S94–Q110. Topologically, residues D111–R112 are extracellular. A helical transmembrane segment spans residues L113–W133. Over L134–Q153 the chain is Cytoplasmic. A helical membrane pass occupies residues V154–W174. Position 175 (D175) is a topological domain, extracellular. Residues Y176 to P196 form a helical membrane-spanning segment. The Cytoplasmic segment spans residues K197 to V220.

It belongs to the TMEM8 family.

The protein localises to the cell membrane. Functionally, myoblast-specific protein that mediates myoblast fusion, an essential step for the formation of multi-nucleated muscle fibers. Actively participates in the membrane fusion reaction by mediating the mixing of cell membrane lipids (hemifusion) upstream of mymx. The chain is Protein myomaker from Danio rerio (Zebrafish).